The sequence spans 301 residues: tRNA dimethylallyltransferase (301 aa).

10–17 contributes to the ATP binding site; the sequence is GATATGKT. 12 to 17 contributes to the substrate binding site; the sequence is TATGKT. The interval 35–38 is interaction with substrate tRNA; sequence DSRQ.

Belongs to the IPP transferase family. Monomer. Mg(2+) serves as cofactor.

The enzyme catalyses adenosine(37) in tRNA + dimethylallyl diphosphate = N(6)-dimethylallyladenosine(37) in tRNA + diphosphate. In terms of biological role, catalyzes the transfer of a dimethylallyl group onto the adenine at position 37 in tRNAs that read codons beginning with uridine, leading to the formation of N6-(dimethylallyl)adenosine (i(6)A). In Crocosphaera subtropica (strain ATCC 51142 / BH68) (Cyanothece sp. (strain ATCC 51142)), this protein is tRNA dimethylallyltransferase.